Consider the following 261-residue polypeptide: 4-phosphopantoate--beta-alanine ligase (261 aa).

ATP is bound by residues Arg-17, Arg-39, 181-183 (DLN), 187-188 (RS), and 199-200 (NI).

Belongs to the archaeal phosphopantothenate synthetase family. Homodimer.

The catalysed reaction is (R)-4-phosphopantoate + beta-alanine + ATP = (R)-4'-phosphopantothenate + AMP + diphosphate + H(+). It functions in the pathway cofactor biosynthesis; coenzyme A biosynthesis. Its activity is regulated as follows. Activity is not affected by 4'-phosphopantothenate or CoA/acetyl-CoA. Its function is as follows. Catalyzes the condensation of (R)-4-phosphopantoate and beta-alanine to 4'-phosphopantothenate in the CoA biosynthesis pathway. Cannot use (R)-pantoate as substrate and thus does not display pantothenate synthetase (PS) activity. Displays strict specificity for its natural substrates, 4-phosphopantoate, ATP and beta-alanine. The chain is 4-phosphopantoate--beta-alanine ligase from Thermococcus kodakarensis (strain ATCC BAA-918 / JCM 12380 / KOD1) (Pyrococcus kodakaraensis (strain KOD1)).